The primary structure comprises 448 residues: Acetate kinase (448 aa).

A Mg(2+)-binding site is contributed by Asn-7. Lys-14 contacts ATP. Arg-91 contacts substrate. The Proton donor/acceptor role is filled by Asp-148. Residues 208–212 and 283–285 contribute to the ATP site; these read HIGNG and DRR. Glu-388 is a Mg(2+) binding site.

This sequence belongs to the acetokinase family. Homodimer. It depends on Mg(2+) as a cofactor. Mn(2+) serves as cofactor.

Its subcellular location is the cytoplasm. The enzyme catalyses acetate + ATP = acetyl phosphate + ADP. Its pathway is metabolic intermediate biosynthesis; acetyl-CoA biosynthesis; acetyl-CoA from acetate: step 1/2. Functionally, catalyzes the formation of acetyl phosphate from acetate and ATP. Can also catalyze the reverse reaction. The chain is Acetate kinase from Treponema pallidum (strain Nichols).